A 312-amino-acid chain; its full sequence is MAIPAIQPYQMPTASDMPQNKVSWVPDPNRAVLLIHDMQNYFVDAFTAGASPVTELSANIRKLKNQCVQLGIPVVYTAQPGSQNPDDRALLTDFWGPGLNSGPYEEKIITELAPEDDDLVLTKWRYSAFKRTNLLEMMRKEGRDQLIITGIYAHIGCLVTACEAFMEDIKAFFVGDAVADFSLEKHQMALEYAAGRCAFTVMTDSLLDQLQNAPADVQKTSANTGKKNVFTCENIRKQIAELLQETPEDITDQEDLLDRGLDSVRIMTLVEQWRREGAEVTFVELAERPTIEEWQKLLTTRSQQVLPNADYL.

Residues 229–302 (VFTCENIRKQ…EWQKLLTTRS (74 aa)) enclose the Carrier domain. Ser263 bears the O-(pantetheine 4'-phosphoryl)serine mark.

The protein belongs to the isochorismatase family.

It catalyses the reaction isochorismate + H2O = (2S,3S)-2,3-dihydroxy-2,3-dihydrobenzoate + pyruvate. The protein operates within siderophore biosynthesis; bacillibactin biosynthesis. The polypeptide is Isochorismatase (dhbB) (Bacillus subtilis (strain 168)).